Consider the following 340-residue polypeptide: Ferrochelatase (340 aa).

The Fe cation site is built by His-189 and Glu-292.

Belongs to the ferrochelatase family.

It localises to the cytoplasm. The enzyme catalyses heme b + 2 H(+) = protoporphyrin IX + Fe(2+). It participates in porphyrin-containing compound metabolism; protoheme biosynthesis; protoheme from protoporphyrin-IX: step 1/1. In terms of biological role, catalyzes the ferrous insertion into protoporphyrin IX. The sequence is that of Ferrochelatase from Ectopseudomonas mendocina (strain ymp) (Pseudomonas mendocina).